A 133-amino-acid polypeptide reads, in one-letter code: Nickel-responsive regulator (133 aa).

Ni(2+)-binding residues include His76, His87, His89, and Cys95.

It belongs to the transcriptional regulatory CopG/NikR family. As to quaternary structure, homotetramer. It depends on Ni(2+) as a cofactor.

Transcriptional repressor of the nikABCDE operon. Is active in the presence of excessive concentrations of intracellular nickel. The chain is Nickel-responsive regulator from Escherichia coli (strain SMS-3-5 / SECEC).